Here is a 352-residue protein sequence, read N- to C-terminus: RNA demethylase ALKBH5 (352 aa).

Residues 18–34 (RDKVFEYSNGEKRKYRE) are compositionally biased toward basic and acidic residues. Residues 18-47 (RDKVFEYSNGEKRKYRESDDDESEYEERRD) are disordered. Residue Tyr107 is part of the active site. The 2-oxoglutarate site is built by Asn161, Tyr163, and His172. Fe cation is bound by residues His172, Asp174, and His234. Cys198 and Cys235 are oxidised to a cystine. The 2-oxoglutarate site is built by His234 and Arg245. Positions 260–352 (LDSNSLSPSI…PTRRVKMRRH (93 aa)) are disordered. Residues 272–285 (PKRRHILKAKRSHR) are compositionally biased toward basic residues. Composition is skewed to basic and acidic residues over residues 286–306 (KADPDAAHRPRVLEMDKELQR) and 315–343 (RHDDGSSENSWRRADDREPAARYTHDHAP).

It belongs to the alkB family. Monomer. The cofactor is Fe(2+).

Its subcellular location is the nucleus speckle. It catalyses the reaction an N(6)-methyladenosine in mRNA + 2-oxoglutarate + O2 = an adenosine in mRNA + formaldehyde + succinate + CO2. Functionally, dioxygenase that specifically demethylates N(6)-methyladenosine (m6A) RNA, the most prevalent internal modification of messenger RNA (mRNA) in higher eukaryotes. Demethylates RNA by oxidative demethylation, which requires molecular oxygen, alpha-ketoglutarate and iron. Demethylation of m6A mRNA affects mRNA processing, translation and export. This chain is RNA demethylase ALKBH5 (alkbh5), found in Danio rerio (Zebrafish).